The primary structure comprises 157 residues: SsrA-binding protein (157 aa).

This sequence belongs to the SmpB family.

Its subcellular location is the cytoplasm. Its function is as follows. Required for rescue of stalled ribosomes mediated by trans-translation. Binds to transfer-messenger RNA (tmRNA), required for stable association of tmRNA with ribosomes. tmRNA and SmpB together mimic tRNA shape, replacing the anticodon stem-loop with SmpB. tmRNA is encoded by the ssrA gene; the 2 termini fold to resemble tRNA(Ala) and it encodes a 'tag peptide', a short internal open reading frame. During trans-translation Ala-aminoacylated tmRNA acts like a tRNA, entering the A-site of stalled ribosomes, displacing the stalled mRNA. The ribosome then switches to translate the ORF on the tmRNA; the nascent peptide is terminated with the 'tag peptide' encoded by the tmRNA and targeted for degradation. The ribosome is freed to recommence translation, which seems to be the essential function of trans-translation. The chain is SsrA-binding protein from Chlorobium luteolum (strain DSM 273 / BCRC 81028 / 2530) (Pelodictyon luteolum).